The primary structure comprises 249 residues: tRNA pseudouridine synthase A (249 aa).

The Nucleophile role is filled by Asp53. A substrate-binding site is contributed by Tyr111.

It belongs to the tRNA pseudouridine synthase TruA family. Homodimer.

It catalyses the reaction uridine(38/39/40) in tRNA = pseudouridine(38/39/40) in tRNA. In terms of biological role, formation of pseudouridine at positions 38, 39 and 40 in the anticodon stem and loop of transfer RNAs. The chain is tRNA pseudouridine synthase A from Streptococcus equi subsp. zooepidemicus (strain MGCS10565).